We begin with the raw amino-acid sequence, 59 residues long: Ferredoxin (59 aa).

Residues 2 to 29 form the 4Fe-4S ferredoxin-type domain; that stretch reads KVSVDKDACIGCGVCASICPDVFEMDDD. Cysteine 10, cysteine 13, and cysteine 16 together coordinate [4Fe-4S] cluster. The cysteines at positions 20 and 43 are disulfide-linked. Cysteine 51 is a binding site for [4Fe-4S] cluster.

[4Fe-4S] cluster is required as a cofactor. It depends on [3Fe-4S] cluster as a cofactor.

Ferredoxins are iron-sulfur proteins that transfer electrons in a wide variety of metabolic reactions. The chain is Ferredoxin from Thermococcus litoralis.